The chain runs to 141 residues: Large ribosomal subunit protein uL11 (141 aa).

The protein belongs to the universal ribosomal protein uL11 family. Part of the ribosomal stalk of the 50S ribosomal subunit. Interacts with L10 and the large rRNA to form the base of the stalk. L10 forms an elongated spine to which L12 dimers bind in a sequential fashion forming a multimeric L10(L12)X complex. In terms of processing, one or more lysine residues are methylated.

Functionally, forms part of the ribosomal stalk which helps the ribosome interact with GTP-bound translation factors. The protein is Large ribosomal subunit protein uL11 of Chlorobium chlorochromatii (strain CaD3).